Consider the following 256-residue polypeptide: Hemin import ATP-binding protein HmuV (256 aa).

Positions 2–239 constitute an ABC transporter domain; the sequence is IHAFAVSVIR…ANVREVYQVD (238 aa). ATP is bound at residue 34 to 41; that stretch reads GPNGAGKS.

The protein belongs to the ABC transporter superfamily. Heme (hemin) importer (TC 3.A.1.14.5) family. The complex is composed of two ATP-binding proteins (HmuV), two transmembrane proteins (HmuU) and a solute-binding protein (HmuT).

It is found in the cell inner membrane. In terms of biological role, part of the ABC transporter complex HmuTUV involved in hemin import. Responsible for energy coupling to the transport system. This chain is Hemin import ATP-binding protein HmuV, found in Hahella chejuensis (strain KCTC 2396).